The primary structure comprises 266 residues: Putative cysteine-rich repeat secretory protein 20 (266 aa).

The first 33 residues, 1–33, serve as a signal peptide directing secretion; that stretch reads MYFPPSSVPKRLVLVHISAVVAIKLLLIRSVSS. Gnk2-homologous domains follow at residues 40–142 and 148–261; these read YLQH…SIRN and YNNN…LYPF.

Belongs to the cysteine-rich repeat secretory protein family.

It localises to the secreted. This Arabidopsis thaliana (Mouse-ear cress) protein is Putative cysteine-rich repeat secretory protein 20 (CRRSP20).